The chain runs to 409 residues: N-acetylglucosamine-6-phosphate deacetylase (409 aa).

Position 143 (Glu-143) interacts with a divalent metal cation. 154 to 155 (AH) is a binding site for substrate. Residues His-211 and His-232 each coordinate a divalent metal cation. Residues 235-236 (NA), Arg-243, and 269-272 (DGIH) contribute to the substrate site. Asp-294 serves as the catalytic Proton donor/acceptor. 328-330 (LSG) provides a ligand contact to substrate.

The protein belongs to the metallo-dependent hydrolases superfamily. NagA family. A divalent metal cation is required as a cofactor.

The enzyme catalyses N-acetyl-D-glucosamine 6-phosphate + H2O = D-glucosamine 6-phosphate + acetate. It participates in amino-sugar metabolism; N-acetylneuraminate degradation. Its function is as follows. Hydrolyzes the N-glycolyl group from N-glycolylglucosamine 6-phosphate (GlcNGc-6-P) in the N-glycolylneuraminic acid (Neu5Gc) degradation pathway. In Rattus norvegicus (Rat), this protein is N-acetylglucosamine-6-phosphate deacetylase (Amdhd2).